Here is a 272-residue protein sequence, read N- to C-terminus: Shikimate dehydrogenase (NADP(+)) (272 aa).

Shikimate is bound by residues 14–16 (SKS) and T61. The active-site Proton acceptor is K65. NADP(+) is bound at residue E77. Shikimate contacts are provided by N86 and D102. Residues 126 to 130 (GAGGA), 149 to 154 (NRTYSR), and M213 each bind NADP(+). Y215 is a shikimate binding site. Residue G237 coordinates NADP(+).

The protein belongs to the shikimate dehydrogenase family. As to quaternary structure, homodimer.

It catalyses the reaction shikimate + NADP(+) = 3-dehydroshikimate + NADPH + H(+). It participates in metabolic intermediate biosynthesis; chorismate biosynthesis; chorismate from D-erythrose 4-phosphate and phosphoenolpyruvate: step 4/7. Its function is as follows. Involved in the biosynthesis of the chorismate, which leads to the biosynthesis of aromatic amino acids. Catalyzes the reversible NADPH linked reduction of 3-dehydroshikimate (DHSA) to yield shikimate (SA). The sequence is that of Shikimate dehydrogenase (NADP(+)) from Enterobacter sp. (strain 638).